A 153-amino-acid chain; its full sequence is Arachidonate 5-lipoxygenase-activating protein (153 aa).

Residues 1–8 (MDQETVGN) are Lumenal-facing. Residues 9-30 (VVLLAIVTLISVIQNGFFAHKV) traverse the membrane as a helical segment. Residues 31–52 (EHESKTQNGRSFQRTGTLAFER) are Cytoplasmic-facing. The helical transmembrane segment at 53-77 (VYTANQNCVDAYPTFLVMLWSAGLL) threads the bilayer. The Lumenal segment spans residues 78 to 80 (CSQ). The chain crosses the membrane as a helical span at residues 81 to 102 (VPAAFAGLMYLFVRQKYFVGYL). Over 103–107 (GERRQ) the chain is Cytoplasmic. An intramembrane segment occupies 108-115 (STPGYIFG). Residues 116-128 (KRIILFLFLMSLA) form a helical membrane-spanning segment. Topologically, residues 129–153 (GIFNYYLILFFGSDFENYIKTITTT) are lumenal.

It belongs to the MAPEG family. Homotrimer. Interacts with LTC4S and ALOX5.

It is found in the nucleus membrane. Its subcellular location is the endoplasmic reticulum membrane. Functionally, required for leukotriene biosynthesis by ALOX5 (5-lipoxygenase). Anchors ALOX5 to the membrane. Binds arachidonic acid, and could play an essential role in the transfer of arachidonic acid to ALOX5. Binds to MK-886, a compound that blocks the biosynthesis of leukotrienes. In Equus caballus (Horse), this protein is Arachidonate 5-lipoxygenase-activating protein (ALOX5AP).